We begin with the raw amino-acid sequence, 340 residues long: CRISPR system Cmr subunit Cmr6 (340 aa).

The protein belongs to the CRISPR system Cmr6 family. Part of the type III-B Cmr ribonucleoprotein (RNP) complex, an elongated RNP with Cmr2 and Cmr3 as the base, with Cmr4 and Cmr5 forming a helical core along the mature crRNA (39 or 45 nt in length), while the complex is capped by Cmr6 and Cmr1. The 5' end of the crRNA is bound to Cmr2 and Cmr3, while Cmr6 and a Cmr1 subunit (Cmr1-1 or Cmr1-2) cap the 3' end of the crRNA. The target RNA lies antiparallel to the crRNA, with its 5' end near Cmr1 and Cmr6 and its 3' end near Cmr2 and Cmr3; major target cleavage occurs nears the junction of Cmr1/Cmr6 and Cmr4/Cmr, with minor cleavage occurring at 6 nt intervals which coincide with the proposed spacing of Cmr4 subunits. Interacts with Cmr4 and Cmr5.

It localises to the cytoplasm. Functionally, CRISPR (clustered regularly interspaced short palindromic repeat), is an adaptive immune system that provides protection against mobile genetic elements (viruses, transposable elements and conjugative plasmids). CRISPR clusters contain sequences complementary to antecedent mobile elements and target invading nucleic acids. CRISPR clusters are transcribed and processed into CRISPR RNA (crRNA), formerly called psiRNA (prokaryotic silencing) in this organism. Part of the Cmr ribonucleoprotein complex which has divalent cation-dependent endoribonuclease activity specific for ssRNA complementary to the crRNA (target RNA), generating 5' hydroxy- and 3' phosphate or 2'-3' cyclic phosphate termini. Cmr4 is probably the subunit that cleaves target RNA. Cmr complex does not cleave ssDNA complementary to the crRNA. Cleavage of invading RNA is guided by the crRNA; substrate cleavage occurs a fixed distance (14 nt) from the 3' end of the crRNA. In vitro reconstitution shows Cmr1-2 and Cmr5 are not absolutely necessary for target cleavage. The sequence is that of CRISPR system Cmr subunit Cmr6 from Pyrococcus furiosus (strain ATCC 43587 / DSM 3638 / JCM 8422 / Vc1).